A 160-amino-acid polypeptide reads, in one-letter code: Phosphopantetheine adenylyltransferase (160 aa).

Serine 10 contributes to the substrate binding site. ATP contacts are provided by residues 10–11 (SF) and histidine 18. Residues lysine 42, threonine 74, and arginine 88 each coordinate substrate. Residues 89-91 (GLR), glutamate 99, and 124-130 (YSFVSST) each bind ATP.

Belongs to the bacterial CoaD family. As to quaternary structure, homohexamer. It depends on Mg(2+) as a cofactor.

Its subcellular location is the cytoplasm. The enzyme catalyses (R)-4'-phosphopantetheine + ATP + H(+) = 3'-dephospho-CoA + diphosphate. It participates in cofactor biosynthesis; coenzyme A biosynthesis; CoA from (R)-pantothenate: step 4/5. Reversibly transfers an adenylyl group from ATP to 4'-phosphopantetheine, yielding dephospho-CoA (dPCoA) and pyrophosphate. The polypeptide is Phosphopantetheine adenylyltransferase (Leptospira biflexa serovar Patoc (strain Patoc 1 / Ames)).